Consider the following 353-residue polypeptide: Photosystem II D2 protein (353 aa).

Position 2 is an N-acetylthreonine (Thr-2). Thr-2 bears the Phosphothreonine mark. The helical transmembrane segment at Cys-41–Thr-61 threads the bilayer. Residue His-118 participates in chlorophyll a binding. Residues Gly-125–Pro-141 traverse the membrane as a helical segment. Pheophytin a is bound by residues Gln-130 and Asn-143. A helical transmembrane segment spans residues Val-153–Ser-166. His-198 lines the chlorophyll a pocket. The helical transmembrane segment at Ala-208 to Asp-228 threads the bilayer. A plastoquinone is bound by residues His-215 and Phe-262. Fe cation is bound at residue His-215. A Fe cation-binding site is contributed by His-269. The helical transmembrane segment at Gly-279–Arg-295 threads the bilayer.

This sequence belongs to the reaction center PufL/M/PsbA/D family. In terms of assembly, PSII is composed of 1 copy each of membrane proteins PsbA, PsbB, PsbC, PsbD, PsbE, PsbF, PsbH, PsbI, PsbJ, PsbK, PsbL, PsbM, PsbT, PsbX, PsbY, PsbZ, Psb30/Ycf12, at least 3 peripheral proteins of the oxygen-evolving complex and a large number of cofactors. It forms dimeric complexes. Requires The D1/D2 heterodimer binds P680, chlorophylls that are the primary electron donor of PSII, and subsequent electron acceptors. It shares a non-heme iron and each subunit binds pheophytin, quinone, additional chlorophylls, carotenoids and lipids. There is also a Cl(-1) ion associated with D1 and D2, which is required for oxygen evolution. The PSII complex binds additional chlorophylls, carotenoids and specific lipids. as cofactor.

It localises to the plastid. The protein resides in the chloroplast thylakoid membrane. The enzyme catalyses 2 a plastoquinone + 4 hnu + 2 H2O = 2 a plastoquinol + O2. In terms of biological role, photosystem II (PSII) is a light-driven water:plastoquinone oxidoreductase that uses light energy to abstract electrons from H(2)O, generating O(2) and a proton gradient subsequently used for ATP formation. It consists of a core antenna complex that captures photons, and an electron transfer chain that converts photonic excitation into a charge separation. The D1/D2 (PsbA/PsbD) reaction center heterodimer binds P680, the primary electron donor of PSII as well as several subsequent electron acceptors. D2 is needed for assembly of a stable PSII complex. This chain is Photosystem II D2 protein, found in Chaetosphaeridium globosum (Charophycean green alga).